Here is a 544-residue protein sequence, read N- to C-terminus: CTP synthase (544 aa).

The segment at 1–267 (MSKFVFVTGG…GDLLVSRLHL (267 aa)) is amidoligase domain. S13 contacts CTP. S13 serves as a coordination point for UTP. 14-19 (SVGKGI) is an ATP binding site. Y54 is a binding site for L-glutamine. An ATP-binding site is contributed by D71. Mg(2+) is bound by residues D71 and E141. Residues 148–150 (DIE), 188–193 (KTKPTQ), and K224 contribute to the CTP site. UTP is bound by residues 188–193 (KTKPTQ) and K224. A Glutamine amidotransferase type-1 domain is found at 299–534 (YVELKDAYYS…INAAKKVIRD (236 aa)). An L-glutamine-binding site is contributed by G354. C381 functions as the Nucleophile; for glutamine hydrolysis in the catalytic mechanism. Residues 382–385 (LGMQ), E405, and R462 each bind L-glutamine. Catalysis depends on residues H507 and E509.

This sequence belongs to the CTP synthase family. In terms of assembly, homotetramer.

The enzyme catalyses UTP + L-glutamine + ATP + H2O = CTP + L-glutamate + ADP + phosphate + 2 H(+). It catalyses the reaction L-glutamine + H2O = L-glutamate + NH4(+). It carries out the reaction UTP + NH4(+) + ATP = CTP + ADP + phosphate + 2 H(+). It functions in the pathway pyrimidine metabolism; CTP biosynthesis via de novo pathway; CTP from UDP: step 2/2. With respect to regulation, allosterically activated by GTP, when glutamine is the substrate; GTP has no effect on the reaction when ammonia is the substrate. The allosteric effector GTP functions by stabilizing the protein conformation that binds the tetrahedral intermediate(s) formed during glutamine hydrolysis. Inhibited by the product CTP, via allosteric rather than competitive inhibition. Its function is as follows. Catalyzes the ATP-dependent amination of UTP to CTP with either L-glutamine or ammonia as the source of nitrogen. Regulates intracellular CTP levels through interactions with the four ribonucleotide triphosphates. The polypeptide is CTP synthase (Dehalococcoides mccartyi (strain ATCC BAA-2266 / KCTC 15142 / 195) (Dehalococcoides ethenogenes (strain 195))).